A 314-amino-acid chain; its full sequence is Olfactory receptor 52K2 (314 aa).

Residues 1-27 (MSASNITLTHPTAFLLVGIPGLEHLHI) are Extracellular-facing. The N-linked (GlcNAc...) asparagine glycan is linked to N5. A helical transmembrane segment spans residues 28 to 48 (WISIPFCLAYTLALLGNCTLL). The Cytoplasmic segment spans residues 49 to 56 (LIIQADAA). The helical transmembrane segment at 57–77 (LHEPMYLFLAMLAAIDLVLSS) threads the bilayer. The Extracellular segment spans residues 78 to 101 (SALPKMLAIFWFRDREINFFACLA). An intrachain disulfide couples C99 to C191. A helical transmembrane segment spans residues 102–122 (QMFFLHSFSIMESAVLLAMAF). Residues 123-141 (DRYVAICKPLHYTKVLTGS) lie on the Cytoplasmic side of the membrane. A helical transmembrane segment spans residues 142–162 (LITKIGMAAVARAVTLMTPLP). The Extracellular segment spans residues 163 to 198 (FLLRCFHYCRGPVIAHCYCEHMAVVRLACGDTSFNN). Residues 199-219 (IYGIAVAMFIVVLDLLLVILS) traverse the membrane as a helical segment. Over 220 to 239 (YIFILQAVLLLASQEARYKA) the chain is Cytoplasmic. A helical transmembrane segment spans residues 240–260 (FGTCVSHIGAILAFYTTVVIS). Residues 261-275 (SVMHRVARHAAPHVH) are Extracellular-facing. The chain crosses the membrane as a helical span at residues 276-296 (ILLANFYLLFPPMVNPIIYGV). The Cytoplasmic portion of the chain corresponds to 297–314 (KTKQIRESILGVFPRKDM).

This sequence belongs to the G-protein coupled receptor 1 family.

It localises to the cell membrane. Odorant receptor. This chain is Olfactory receptor 52K2 (OR52K2), found in Homo sapiens (Human).